A 244-amino-acid chain; its full sequence is DNA repair protein RecO (244 aa).

It belongs to the RecO family.

Functionally, involved in DNA repair and RecF pathway recombination. The protein is DNA repair protein RecO of Caldicellulosiruptor saccharolyticus (strain ATCC 43494 / DSM 8903 / Tp8T 6331).